The sequence spans 334 residues: L-lactate dehydrogenase B chain (334 aa).

Residues 30–58 and R100 contribute to the NAD(+) site; that span reads GQVG…MEDR. Substrate is bound by residues R107, N139, and R170. NAD(+) is bound at residue N139. H194 acts as the Proton acceptor in catalysis. T249 is a binding site for substrate.

Belongs to the LDH/MDH superfamily. LDH family. Homotetramer.

It localises to the cytoplasm. It catalyses the reaction (S)-lactate + NAD(+) = pyruvate + NADH + H(+). It participates in fermentation; pyruvate fermentation to lactate; (S)-lactate from pyruvate: step 1/1. Its function is as follows. Interconverts simultaneously and stereospecifically pyruvate and lactate with concomitant interconversion of NADH and NAD(+). This is L-lactate dehydrogenase B chain (ldhb) from Fundulus heteroclitus (Killifish).